A 131-amino-acid polypeptide reads, in one-letter code: Large ribosomal subunit protein bL17 (131 aa).

This sequence belongs to the bacterial ribosomal protein bL17 family. As to quaternary structure, part of the 50S ribosomal subunit. Contacts protein L32.

The sequence is that of Large ribosomal subunit protein bL17 from Paraburkholderia phymatum (strain DSM 17167 / CIP 108236 / LMG 21445 / STM815) (Burkholderia phymatum).